Reading from the N-terminus, the 448-residue chain is Adenylyltransferase and sulfurtransferase UBA4 (448 aa).

ATP contacts are provided by residues G88, D109, 116 to 120 (SNLHR), K133, and 177 to 178 (DT). The Zn(2+) site is built by C219 and C222. C236 acts as the Glycyl thioester intermediate; for adenylyltransferase activity in catalysis. C297 and C300 together coordinate Zn(2+). Residues 349–446 (QGENSILIDV…WSKEIDSKIP (98 aa)) form the Rhodanese domain. C405 acts as the Cysteine persulfide intermediate; for sulfurtransferase activity in catalysis.

This sequence in the N-terminal section; belongs to the HesA/MoeB/ThiF family. UBA4 subfamily. Zn(2+) is required as a cofactor.

The protein resides in the cytoplasm. The protein localises to the cytosol. It participates in tRNA modification; 5-methoxycarbonylmethyl-2-thiouridine-tRNA biosynthesis. Its function is as follows. Plays a central role in 2-thiolation of mcm(5)S(2)U at tRNA wobble positions of cytosolic tRNA(Lys), tRNA(Glu) and tRNA(Gln). Acts by mediating the C-terminal thiocarboxylation of sulfur carrier URM1. Its N-terminus first activates URM1 as acyl-adenylate (-COAMP), then the persulfide sulfur on the catalytic cysteine is transferred to URM1 to form thiocarboxylation (-COSH) of its C-terminus. The reaction probably involves hydrogen sulfide that is generated from the persulfide intermediate and that acts as a nucleophile towards URM1. Subsequently, a transient disulfide bond is formed. Does not use thiosulfate as sulfur donor; NFS1 probably acting as a sulfur donor for thiocarboxylation reactions. Prior mcm(5) tRNA modification by the elongator complex is required for 2-thiolation. May also be involved in protein urmylation. This chain is Adenylyltransferase and sulfurtransferase UBA4, found in Debaryomyces hansenii (strain ATCC 36239 / CBS 767 / BCRC 21394 / JCM 1990 / NBRC 0083 / IGC 2968) (Yeast).